A 401-amino-acid chain; its full sequence is Formate-dependent phosphoribosylglycinamide formyltransferase (401 aa).

N(1)-(5-phospho-beta-D-ribosyl)glycinamide-binding positions include 27–28 (EL) and glutamate 87. ATP-binding positions include arginine 119, lysine 160, 165-170 (SSGKGQ), 200-203 (EELV), and glutamate 208. Residues 124 to 313 (EFAAEEVGVT…QFDLHLRAIL (190 aa)) enclose the ATP-grasp domain. Mg(2+)-binding residues include glutamate 272 and glutamate 284. N(1)-(5-phospho-beta-D-ribosyl)glycinamide contacts are provided by residues aspartate 291, lysine 361, and 368–369 (RR).

This sequence belongs to the PurK/PurT family. In terms of assembly, homodimer.

The enzyme catalyses N(1)-(5-phospho-beta-D-ribosyl)glycinamide + formate + ATP = N(2)-formyl-N(1)-(5-phospho-beta-D-ribosyl)glycinamide + ADP + phosphate + H(+). The protein operates within purine metabolism; IMP biosynthesis via de novo pathway; N(2)-formyl-N(1)-(5-phospho-D-ribosyl)glycinamide from N(1)-(5-phospho-D-ribosyl)glycinamide (formate route): step 1/1. Its function is as follows. Involved in the de novo purine biosynthesis. Catalyzes the transfer of formate to 5-phospho-ribosyl-glycinamide (GAR), producing 5-phospho-ribosyl-N-formylglycinamide (FGAR). Formate is provided by PurU via hydrolysis of 10-formyl-tetrahydrofolate. The chain is Formate-dependent phosphoribosylglycinamide formyltransferase from Haloquadratum walsbyi (strain DSM 16790 / HBSQ001).